Reading from the N-terminus, the 195-residue chain is Holliday junction branch migration complex subunit RuvA (195 aa).

The domain I stretch occupies residues 1-62 (MIEFVKGPVA…EDQQTLYGFR (62 aa)). The interval 63–141 (SRRERELFNK…ELAPDYVPNE (79 aa)) is domain II. Residues 141–145 (EGLFA) are flexible linker. Residues 146–195 (QGASELDEACEALVALGYSEREIAKVRKALSGEILTTDAYIKRALQLLLK) are domain III.

The protein belongs to the RuvA family. As to quaternary structure, homotetramer. Forms an RuvA(8)-RuvB(12)-Holliday junction (HJ) complex. HJ DNA is sandwiched between 2 RuvA tetramers; dsDNA enters through RuvA and exits via RuvB. An RuvB hexamer assembles on each DNA strand where it exits the tetramer. Each RuvB hexamer is contacted by two RuvA subunits (via domain III) on 2 adjacent RuvB subunits; this complex drives branch migration. In the full resolvosome a probable DNA-RuvA(4)-RuvB(12)-RuvC(2) complex forms which resolves the HJ.

It is found in the cytoplasm. The RuvA-RuvB-RuvC complex processes Holliday junction (HJ) DNA during genetic recombination and DNA repair, while the RuvA-RuvB complex plays an important role in the rescue of blocked DNA replication forks via replication fork reversal (RFR). RuvA specifically binds to HJ cruciform DNA, conferring on it an open structure. The RuvB hexamer acts as an ATP-dependent pump, pulling dsDNA into and through the RuvAB complex. HJ branch migration allows RuvC to scan DNA until it finds its consensus sequence, where it cleaves and resolves the cruciform DNA. The polypeptide is Holliday junction branch migration complex subunit RuvA (Exiguobacterium sp. (strain ATCC BAA-1283 / AT1b)).